The following is a 386-amino-acid chain: Probable protein phosphatase 2C 36 (386 aa).

The region spanning 60–363 (ELSVAVVQGN…DDITVIVLFI (304 aa)) is the PPM-type phosphatase domain. Mn(2+) is bound by residues Asp94, Gly95, Asp295, and Asp354.

Belongs to the PP2C family. Requires Mg(2+) as cofactor. Mn(2+) is required as a cofactor.

It catalyses the reaction O-phospho-L-seryl-[protein] + H2O = L-seryl-[protein] + phosphate. It carries out the reaction O-phospho-L-threonyl-[protein] + H2O = L-threonyl-[protein] + phosphate. This chain is Probable protein phosphatase 2C 36, found in Oryza sativa subsp. japonica (Rice).